A 187-amino-acid polypeptide reads, in one-letter code: Interferon beta (187 aa).

The N-terminal stretch at 1–21 is a signal peptide; the sequence is MTNKCLLQIALLLCFSTTALS. Residue Tyr-24 is modified to Phosphotyrosine. A disulfide bond links Cys-52 and Cys-162. Residue Asn-101 is glycosylated (N-linked (GlcNAc...) asparagine).

Belongs to the alpha/beta interferon family. Monomer.

The protein localises to the secreted. Its function is as follows. Type I interferon cytokine that plays a key role in the innate immune response to infection, developing tumors and other inflammatory stimuli. Signals via binding to high-affinity (IFNAR2) and low-affinity (IFNAR1) heterodimeric receptor, activating the canonical Jak-STAT signaling pathway resulting in transcriptional activation or repression of interferon-regulated genes that encode the effectors of the interferon response, such as antiviral proteins, regulators of cell proliferation and differentiation, and immunoregulatory proteins. Signals mostly via binding to a IFNAR1-IFNAR2 heterodimeric receptor, but can also function with IFNAR1 alone and independently of Jak-STAT pathways. Elicits a wide variety of responses, including antiviral and antibacterial activities, and can regulate the development of B-cells, myelopoiesis and lipopolysaccharide (LPS)-inducible production of tumor necrosis factor. Plays a role in neuronal homeostasis by regulating dopamine turnover and protecting dopaminergic neurons: acts by promoting neuronal autophagy and alpha-synuclein clearance, thereby preventing dopaminergic neuron loss. IFNB1 is more potent than interferon-alpha (IFN-alpha) in inducing the apoptotic and antiproliferative pathways required for control of tumor cell growth. The protein is Interferon beta of Homo sapiens (Human).